Reading from the N-terminus, the 704-residue chain is Elongation factor G (704 aa).

The 283-residue stretch at 8–290 (ARYRNIGISA…AVVDYLPSPV (283 aa)) folds into the tr-type G domain. Residues 17 to 24 (AHIDAGKT), 88 to 92 (DTPGH), and 142 to 145 (NKMD) each bind GTP.

Belongs to the TRAFAC class translation factor GTPase superfamily. Classic translation factor GTPase family. EF-G/EF-2 subfamily.

It localises to the cytoplasm. Catalyzes the GTP-dependent ribosomal translocation step during translation elongation. During this step, the ribosome changes from the pre-translocational (PRE) to the post-translocational (POST) state as the newly formed A-site-bound peptidyl-tRNA and P-site-bound deacylated tRNA move to the P and E sites, respectively. Catalyzes the coordinated movement of the two tRNA molecules, the mRNA and conformational changes in the ribosome. The chain is Elongation factor G from Pectobacterium carotovorum subsp. carotovorum (strain PC1).